Reading from the N-terminus, the 531-residue chain is Peptide chain release factor 3 (531 aa).

Residues 13–282 enclose the tr-type G domain; that stretch reads AKRRTFAIIS…TLIEHAPPPK (270 aa). GTP is bound by residues 22 to 29, 90 to 94, and 144 to 147; these read SHPDAGKT, DTPGH, and NKLD.

Belongs to the TRAFAC class translation factor GTPase superfamily. Classic translation factor GTPase family. PrfC subfamily.

It localises to the cytoplasm. Its function is as follows. Increases the formation of ribosomal termination complexes and stimulates activities of RF-1 and RF-2. It binds guanine nucleotides and has strong preference for UGA stop codons. It may interact directly with the ribosome. The stimulation of RF-1 and RF-2 is significantly reduced by GTP and GDP, but not by GMP. The chain is Peptide chain release factor 3 from Psychrobacter sp. (strain PRwf-1).